Here is a 343-residue protein sequence, read N- to C-terminus: Mas-related G-protein coupled receptor member F (343 aa).

Topologically, residues 1–44 (MAGNCSWEAHSTNQNKMCPGMSEALELYSRGFLTIEQIATLPPP) are extracellular. Asparagine 4 carries N-linked (GlcNAc...) asparagine glycosylation. A helical membrane pass occupies residues 45–66 (AVTNYIFLLLCLCGLVGNGLVL). The Cytoplasmic segment spans residues 67–82 (WFFGFSIKRTPFSIYF). Residues 83-104 (LHLASADGIYLFSKAVIALLNM) traverse the membrane as a helical segment. The Extracellular segment spans residues 105-123 (GTFLGSFPDYVRRVSRIVG). Residues 124-144 (LCTFFAGVSLLPAISIERCVS) traverse the membrane as a helical segment. Over 145–160 (VIFPMWYWRRRPKRLS) the chain is Cytoplasmic. Residues 161 to 181 (AGVCALLWLLSFLVTSIHNYF) form a helical membrane-spanning segment. At 182 to 198 (CMFLGHEASGTACLNMD) the chain is on the extracellular side. A helical transmembrane segment spans residues 199 to 220 (ISLGILLFFLFCPLMVLPCLAL). Residues 221–241 (ILHVECRARRRQRSAKLNHVV) are Cytoplasmic-facing. Residues 242–263 (LAIVSVFLVSSIYLGIDWFLFW) traverse the membrane as a helical segment. Residues 264–273 (VFQIPAPFPE) lie on the Extracellular side of the membrane. A helical transmembrane segment spans residues 274–294 (YVTDLCICINSSAKPIVYFLA). Residues 295-343 (GRDKSQRLWEPLRVVFQRALRDGAEPGDAASSTPNTVTMEMQCPSGNAS) are Cytoplasmic-facing. The disordered stretch occupies residues 318–343 (AEPGDAASSTPNTVTMEMQCPSGNAS). A compositionally biased stretch (polar residues) spans 324–343 (ASSTPNTVTMEMQCPSGNAS).

It belongs to the G-protein coupled receptor 1 family. Mas subfamily. As to expression, gut, vas deferens, uterus and aorta; barely detectable in liver, kidney, lung, and salivary gland. In the brain, markedly abundant in the cerebellum.

The protein localises to the cell membrane. Functionally, orphan receptor. May bind to a neuropeptide and may regulate nociceptor function and/or development, including the sensation or modulation of pain. This chain is Mas-related G-protein coupled receptor member F (Mrgprf), found in Rattus norvegicus (Rat).